A 560-amino-acid polypeptide reads, in one-letter code: Glucose-6-phosphate isomerase, cytosolic (560 aa).

N-acetylalanine is present on alanine 2. Glutamate 361 functions as the Proton donor in the catalytic mechanism. Active-site residues include histidine 392 and lysine 517.

This sequence belongs to the GPI family. As to quaternary structure, homodimer.

The protein localises to the cytoplasm. The enzyme catalyses alpha-D-glucose 6-phosphate = beta-D-fructose 6-phosphate. It functions in the pathway carbohydrate degradation; glycolysis; D-glyceraldehyde 3-phosphate and glycerone phosphate from D-glucose: step 2/4. With respect to regulation, inhibited by glycerol-3-P (G3P). The polypeptide is Glucose-6-phosphate isomerase, cytosolic (PGIC) (Arabidopsis thaliana (Mouse-ear cress)).